The sequence spans 322 residues: MDTSSINAQSIFDDNAATLKLSWLTGHEGWERGFSSDTVANATSSADLVGHLNLIHPNRIQVLGEAEIDYYQRQTDEDRSRHMAELIALEPPFLVVAGGAAAPPELVLRCTRSSTPLFTTPMSAAAVIDSLRLYMSRILAPRATLHGVFLDILGMGVLLTGDSGLGKSELGLELISRGHGLVADDAVDFVRLGPDFVEGRCPPLLQNLLEVRGLGLLDIKTIFGETAVRRKMKLKLIVQLVRRPDGEFQRLPLESQTVDVLGLPISKVTIQVAAGRNLAVLVEAAVRNTILQLRGIDTLRDFMDRQRLAMQDPDSQFPGKLV.

Catalysis depends on residues His-146 and Lys-167. 161 to 168 (GDSGLGKS) contacts ATP. Position 168 (Ser-168) interacts with Mg(2+). Asp-185 acts as the Proton acceptor; for phosphorylation activity. Proton donor; for dephosphorylation activity in catalysis. Positions 209–218 (LEVRGLGLLD) are important for the catalytic mechanism of both phosphorylation and dephosphorylation. Mg(2+) is bound at residue Glu-210. Arg-250 is an active-site residue. Residues 271-276 (QVAAGR) are important for the catalytic mechanism of dephosphorylation.

This sequence belongs to the HPrK/P family. Homohexamer. Mg(2+) serves as cofactor.

The catalysed reaction is [HPr protein]-L-serine + ATP = [HPr protein]-O-phospho-L-serine + ADP + H(+). It catalyses the reaction [HPr protein]-O-phospho-L-serine + phosphate + H(+) = [HPr protein]-L-serine + diphosphate. Functionally, catalyzes the ATP- as well as the pyrophosphate-dependent phosphorylation of a specific serine residue in HPr, a phosphocarrier protein of the phosphoenolpyruvate-dependent sugar phosphotransferase system (PTS). HprK/P also catalyzes the pyrophosphate-producing, inorganic phosphate-dependent dephosphorylation (phosphorolysis) of seryl-phosphorylated HPr (P-Ser-HPr). This Burkholderia ambifaria (strain ATCC BAA-244 / DSM 16087 / CCUG 44356 / LMG 19182 / AMMD) (Burkholderia cepacia (strain AMMD)) protein is HPr kinase/phosphorylase.